The primary structure comprises 479 residues: Glutamate--tRNA ligase (479 aa).

The 'HIGH' region signature appears at 9 to 19 (PSPTGNLHIGT). Residues 243–247 (KLSKR) carry the 'KMSKS' region motif. Residue Lys-246 coordinates ATP.

The protein belongs to the class-I aminoacyl-tRNA synthetase family. Glutamate--tRNA ligase type 1 subfamily. Monomer.

The protein localises to the cytoplasm. It carries out the reaction tRNA(Glu) + L-glutamate + ATP = L-glutamyl-tRNA(Glu) + AMP + diphosphate. In terms of biological role, catalyzes the attachment of glutamate to tRNA(Glu) in a two-step reaction: glutamate is first activated by ATP to form Glu-AMP and then transferred to the acceptor end of tRNA(Glu). This is Glutamate--tRNA ligase from Synechococcus sp. (strain JA-3-3Ab) (Cyanobacteria bacterium Yellowstone A-Prime).